The following is a 381-amino-acid chain: Endolytic peptidoglycan transglycosylase RlpA (381 aa).

Residues 1–19 (MRKQLPVICVAAGIVLLAA) form the signal peptide. A lipid anchor (N-palmitoyl cysteine) is attached at C20. C20 carries S-diacylglycerol cysteine lipidation. A disordered region spans residues 196 to 274 (LPPRPDLSGG…QPAPVSAPVA (79 aa)). Residues 208 to 218 (SASSAPAQPQG) show a composition bias toward low complexity. The 77-residue stretch at 304-380 (AAASGRFVVQ…AQLQSFIASA (77 aa)) folds into the SPOR domain.

It belongs to the RlpA family.

Its subcellular location is the cell membrane. Functionally, lytic transglycosylase with a strong preference for naked glycan strands that lack stem peptides. The sequence is that of Endolytic peptidoglycan transglycosylase RlpA from Salmonella typhimurium (strain LT2 / SGSC1412 / ATCC 700720).